The following is a 457-amino-acid chain: Hydrogenobyrinate a,c-diamide synthase (457 aa).

The 187-residue stretch at 255–441 (TVAIAAGRAF…LHTHPAATPG (187 aa)) folds into the GATase cobBQ-type domain. Catalysis depends on Cys337, which acts as the Nucleophile.

This sequence belongs to the CobB/CbiA family. It depends on Mg(2+) as a cofactor.

It carries out the reaction hydrogenobyrinate + 2 L-glutamine + 2 ATP + 2 H2O = hydrogenobyrinate a,c-diamide + 2 L-glutamate + 2 ADP + 2 phosphate + 2 H(+). Its pathway is cofactor biosynthesis; adenosylcobalamin biosynthesis; cob(II)yrinate a,c-diamide from precorrin-2 (aerobic route): step 9/10. Its function is as follows. Catalyzes the ATP-dependent amidation of the two carboxylate groups at positions a and c of hydrogenobyrinate, using either L-glutamine or ammonia as the nitrogen source. The chain is Hydrogenobyrinate a,c-diamide synthase from Mycobacterium bovis (strain ATCC BAA-935 / AF2122/97).